The sequence spans 3183 residues: WD repeat- and FYVE domain-containing protein 4 (3183 aa).

Positions 1-15 (MEAEDLSKTEDRPED) are enriched in basic and acidic residues. Disordered stretches follow at residues 1 to 37 (MEAE…EGQS), 790 to 811 (AGQE…GKFK), 938 to 977 (KSLH…QALR), and 1828 to 1852 (KETT…HAAE). Positions 1832-1852 (SESSRNTSSPGASAEASHAAE) are enriched in low complexity. The BEACH-type PH domain occupies 2383-2508 (LDGEKVSQKV…DRSKALKSFS (126 aa)). A BEACH domain is found at 2525 to 2819 (NLRKHPGFDR…QIFTKPHPSR (295 aa)). The segment at 2812–2836 (FTKPHPSRNTTGKNPGPGKDASTPV) is disordered. 5 WD repeats span residues 2930–2969 (LAAW…GRPR), 2979–3018 (GHTQ…RVAC), 3021–3060 (VHRE…ASIT), 3070–3108 (TCCC…MPVP), and 3150–3183 (KASP…SADG).

As to quaternary structure, interacts with HSP90AB1. In terms of tissue distribution, highly expressed in immune tissues, especially B lymphocytes.

The protein resides in the early endosome. It is found in the endoplasmic reticulum. Functionally, plays a critical role in the regulation of cDC1-mediated cross-presentation of viral and tumor antigens in dendritic cells. Mechanistically, acts near the plasma membrane and interacts with endosomal membranes to promote endosomal-to-cytosol antigen trafficking. Also plays a role in B-cell survival through regulation of autophagy. The sequence is that of WD repeat- and FYVE domain-containing protein 4 from Mus musculus (Mouse).